We begin with the raw amino-acid sequence, 406 residues long: Probable sphingosine-1-phosphate phosphatase (406 aa).

2 helical membrane-spanning segments follow: residues 66 to 86 (ILGE…CVAT) and 92 to 112 (LCVV…TFTL). The segment at 107 to 115 (KNTFTLPRP) is phosphatase sequence motif I. The interval 133-136 (PSTH) is phosphatase sequence motif II. H136 serves as the catalytic Proton donor. Transmembrane regions (helical) follow at residues 138-158 (ASAF…FPTI) and 162-182 (FNIS…SVMF). The tract at residues 183-194 (SRLYNGHHTPMD) is phosphatase sequence motif III. Catalysis depends on H190, which acts as the Nucleophile. The next 5 membrane-spanning stretches (helical) occupy residues 193–213 (MDVI…TYQL), 225–245 (TFLF…FFHP), 254–274 (AYPE…SLWL), 313–333 (ILIG…FFFF), and 374–394 (LFVY…FYYL).

It belongs to the type 2 lipid phosphate phosphatase family.

The protein resides in the endoplasmic reticulum membrane. Functionally, has enzymatic activity against both sphingosine 1 phosphate (S1P) and dihydro-S1P. Regulates intracellular and extracellular S1P levels. In Dictyostelium discoideum (Social amoeba), this protein is Probable sphingosine-1-phosphate phosphatase (sppA).